The primary structure comprises 416 residues: Gamma-glutamyl phosphate reductase (416 aa).

This sequence belongs to the gamma-glutamyl phosphate reductase family.

Its subcellular location is the cytoplasm. It catalyses the reaction L-glutamate 5-semialdehyde + phosphate + NADP(+) = L-glutamyl 5-phosphate + NADPH + H(+). Its pathway is amino-acid biosynthesis; L-proline biosynthesis; L-glutamate 5-semialdehyde from L-glutamate: step 2/2. In terms of biological role, catalyzes the NADPH-dependent reduction of L-glutamate 5-phosphate into L-glutamate 5-semialdehyde and phosphate. The product spontaneously undergoes cyclization to form 1-pyrroline-5-carboxylate. The polypeptide is Gamma-glutamyl phosphate reductase (Streptococcus pyogenes serotype M1).